Consider the following 88-residue polypeptide: Small ribosomal subunit protein uS15c (88 aa).

The protein belongs to the universal ribosomal protein uS15 family. In terms of assembly, part of the 30S ribosomal subunit.

Its subcellular location is the plastid. It localises to the chloroplast. This is Small ribosomal subunit protein uS15c (rps15) from Crucihimalaya wallichii (Rock-cress).